A 359-amino-acid chain; its full sequence is Cytoplasmic tRNA 2-thiolation protein 2 (359 aa).

This sequence belongs to the CTU2/NCS2 family.

It localises to the cytoplasm. The protein operates within tRNA modification; 5-methoxycarbonylmethyl-2-thiouridine-tRNA biosynthesis. Its function is as follows. Plays a central role in 2-thiolation of mcm(5)S(2)U at tRNA wobble positions of tRNA(Lys), tRNA(Glu) and tRNA(Gln). May act by forming a heterodimer with NCS6 that ligates sulfur from thiocarboxylated URM1 onto the uridine of tRNAs at wobble position. Prior mcm(5) tRNA modification by the elongator complex is required for 2-thiolation. May also be involved in protein urmylation. This Ajellomyces capsulatus (strain NAm1 / WU24) (Darling's disease fungus) protein is Cytoplasmic tRNA 2-thiolation protein 2.